The primary structure comprises 281 residues: Dexamethasone-induced Ras-related protein 1 (281 aa).

Cys-11 bears the S-nitrosocysteine mark. 31-38 (GSSKVGKT) lines the GTP pocket. Residues 53-61 (YTPTIEDFH) carry the Effector region motif. GTP-binding positions include 78-82 (DTSGN) and 145-148 (NKGD). Cys-278 is modified (cysteine methyl ester). Cys-278 carries S-farnesyl cysteine lipidation. Residues 279–281 (VIS) constitute a propeptide, removed in mature form.

Belongs to the small GTPase superfamily. RasD family. Forms a ternary complex with CAPON and NOS1. Component of a complex, at least composed of APBB1, RASD1/DEXRAS1 and APP. Interacts with APBB1/FE65. S-nitrosylation stimulates guanine-nucleotide exchange activity. Expressed in a variety of tissues including heart, cardiovascular tissues, brain, placenta, lung, liver, skeletal muscle, kidney, pancreas, gastrointestinal and reproductive tissues.

The protein resides in the cell membrane. The protein localises to the cytoplasm. It localises to the perinuclear region. Its subcellular location is the nucleus. In terms of biological role, small GTPase. Negatively regulates the transcription regulation activity of the APBB1/FE65-APP complex via its interaction with APBB1/FE65. The sequence is that of Dexamethasone-induced Ras-related protein 1 (RASD1) from Homo sapiens (Human).